The sequence spans 468 residues: Acetyl-CoA decarbonylase/synthase complex subunit gamma 2 (468 aa).

Positions 1–60 (MKINSPLEAYKYLPQTNCGECGEATCMAFASKLIDRSGKPTQCPPLVKEKKFAKKLAELE) constitute a 4Fe-4S domain. Cys-18, Cys-21, Cys-26, and Cys-43 together coordinate [4Fe-4S] cluster.

Heterodimer of delta and gamma chains. The ACDS complex is made up of alpha, epsilon, beta, gamma and delta chains with a probable stoichiometry of (alpha(2)epsilon(2))(4)-beta(8)-(gamma(1)delta(1))(8). Requires corrinoid as cofactor. It depends on [4Fe-4S] cluster as a cofactor.

It carries out the reaction 5,6,7,8-tetrahydrosarcinapterin + methyl-Co(III)-[corrinoid Fe-S protein] = 5-methyltetrahydrosarcinapterin + Co(I)-[corrinoid Fe-S protein] + H(+). It functions in the pathway one-carbon metabolism; methanogenesis from acetate. Its function is as follows. Part of a complex that catalyzes the reversible cleavage of acetyl-CoA, allowing growth on acetate as sole source of carbon and energy. The polypeptide is Acetyl-CoA decarbonylase/synthase complex subunit gamma 2 (Methanosarcina thermophila).